We begin with the raw amino-acid sequence, 102 residues long: Small ribosomal subunit protein uS10 (102 aa).

It belongs to the universal ribosomal protein uS10 family. In terms of assembly, part of the 30S ribosomal subunit.

Functionally, involved in the binding of tRNA to the ribosomes. This chain is Small ribosomal subunit protein uS10, found in Roseiflexus sp. (strain RS-1).